The sequence spans 327 residues: Porphobilinogen deaminase (327 aa).

At Cys251 the chain carries S-(dipyrrolylmethanemethyl)cysteine.

This sequence belongs to the HMBS family. Dipyrromethane serves as cofactor.

It catalyses the reaction 4 porphobilinogen + H2O = hydroxymethylbilane + 4 NH4(+). It participates in porphyrin-containing compound metabolism; protoporphyrin-IX biosynthesis; coproporphyrinogen-III from 5-aminolevulinate: step 2/4. Its function is as follows. Tetrapolymerization of the monopyrrole PBG into the hydroxymethylbilane pre-uroporphyrinogen in several discrete steps. The sequence is that of Porphobilinogen deaminase (HEM3) from Kluyveromyces lactis (strain ATCC 8585 / CBS 2359 / DSM 70799 / NBRC 1267 / NRRL Y-1140 / WM37) (Yeast).